The chain runs to 103 residues: Small ribosomal subunit protein uS10 (103 aa).

Belongs to the universal ribosomal protein uS10 family. In terms of assembly, part of the 30S ribosomal subunit.

In terms of biological role, involved in the binding of tRNA to the ribosomes. This is Small ribosomal subunit protein uS10 from Picrophilus torridus (strain ATCC 700027 / DSM 9790 / JCM 10055 / NBRC 100828 / KAW 2/3).